We begin with the raw amino-acid sequence, 282 residues long: UPF0759 protein YunF (282 aa).

Belongs to the UPF0759 family.

The chain is UPF0759 protein YunF (yunF) from Bacillus subtilis (strain 168).